A 116-amino-acid chain; its full sequence is Phycoerythrin alpha-3 subunit (116 aa).

(2R,3E)-phycoerythrobilin-binding residues include serine 53, glutamate 63, arginine 64, cysteine 67, and lysine 85.

This sequence belongs to the phycoerythrin family. In terms of assembly, heterotetramer of 2 different alpha chains and 2 identical beta chains which form 2 alpha-beta heterodimers within the heterotetramer. The two alpha-beta heterodimers are rotated to an open configuration in contrast to the closed configuration found in other cryptophyte species due to the insertion of a single amino acid, Asp-65, in a conserved region of the alpha chain. In the open form, the central chromophores are not in physical contact but are separated by a water-filled channel. In terms of processing, contains three phycoerythrobilin chromophores with binding mediated by both the alpha and beta subunits.

It is found in the plastid. The protein resides in the chloroplast thylakoid membrane. Its function is as follows. Light-harvesting photosynthetic tetrapyrrole chromophore-protein from the phycobiliprotein complex. The chain is Phycoerythrin alpha-3 subunit from Hemiselmis andersenii (Cryptophyte alga).